We begin with the raw amino-acid sequence, 467 residues long: MQNPQNPPPAGSAADFYSQMPVKVMGTPGAPGSQSTPGAPGAPGQYPPQQPGAPGSNLPPYPGTQQPGAPGAPGQYPPQQPGQYPPQQPGAPGQYPPQQPGQPGYPPQQPGQSGQYPPQQPGQPGYPPQQPGAPGQYPPQQGQPGQYPPQQPGQPGQYPPQQQGQYPPQQPGQPGAYPPQQSGQPGAYPPQQGVQNTLAKTGAPGQPGVPPPQGAYPGQPGVPPQQGAYPGQQPPMGAYPPQGQPGAYPPQGQPGAYPPQQQQVAYPGQQPPMGAYPPQQGAYPGQQGAYPGQQGAYPGQQGAYPGQPPMGAYPGQQQYGVSAYSQTTAAYQTGAYPGQTPMGVYPGQTTAYAAYQTTAIGYGATSTYSYTRPTYSYATPYSRTAAFVVPVGLPPHVVQKMMAASAAFRIHDSNCSGTLSKKEFKKLIKHLGYYFSKGQTKMLFHSIDRDYSGSLSEREFVDWWSMQ.

2 stretches are compositionally biased toward pro residues: residues 1-10 and 45-62; these read MQNPQNPPPA and QYPPQQPGAPGSNLPPYP. A disordered region spans residues 1–311; sequence MQNPQNPPPA…GAYPGQPPMG (311 aa). The XYPPX motif lies at 45–49; sequence QYPPQ. Residues 63–74 are compositionally biased toward low complexity; it reads GTQQPGAPGAPG. 17 consecutive short sequence motifs (XYPPX) follow at residues 75–79, 83–87, 94–98, 104–108, 115–119, 125–129, 136–140, 146–150, 157–161, 165–169, 176–180, 187–191, 221–225, 238–242, 247–251, 256–260, and 275–279; these read QYPPQ, GYPPQ, AYPPQ, and GVPPQ. Composition is skewed to pro residues over residues 75–109 and 118–131; these read QYPPQQPGQYPPQQPGAPGQYPPQQPGQPGYPPQQ and PQQPGQPGYPPQQP. Positions 132–145 are enriched in low complexity; the sequence is GAPGQYPPQQGQPG. Low complexity-rich tracts occupy residues 153 to 193 and 215 to 246; these read GQPG…PQQG and AYPGQPGVPPQQGAYPGQQPPMGAYPPQGQPG. Residues 253–311 are compositionally biased toward low complexity; that stretch reads QPGAYPPQQQQVAYPGQQPPMGAYPPQQGAYPGQQGAYPGQQGAYPGQQGAYPGQPPMG. 2 consecutive EF-hand domains span residues 399 to 434 and 435 to 467; these read QKMMAASAAFRIHDSNCSGTLSKKEFKKLIKHLGYY and FSKGQTKMLFHSIDRDYSGSLSEREFVDWWSMQ. Residues aspartate 412, asparagine 414, serine 416, threonine 418, and glutamate 423 each contribute to the Ca(2+) site.

The protein is Calcium-binding protein P (cbpP) of Dictyostelium discoideum (Social amoeba).